The sequence spans 342 residues: Probable long-chain-alcohol O-fatty-acyltransferase 3 (342 aa).

Helical transmembrane passes span 9–29 (IKLW…STGI), 36–56 (LLSV…FSYV), 58–78 (FSGC…ILFS), 115–135 (IPIW…QMYE), 153–173 (IFLE…ITLG), 227–247 (MFLG…MLFF), 255–275 (TGEV…EVAV), and 297–317 (VGFV…SGII).

This sequence belongs to the wax synthase family.

It is found in the membrane. The catalysed reaction is a long chain fatty alcohol + a fatty acyl-CoA = a wax ester + CoA. Functionally, catalyzes the final step in the synthesis of long-chain linear esters (waxes). The chain is Probable long-chain-alcohol O-fatty-acyltransferase 3 (AT3) from Arabidopsis thaliana (Mouse-ear cress).